The primary structure comprises 103 residues: Large ribosomal subunit protein uL23 (103 aa).

The protein belongs to the universal ribosomal protein uL23 family. In terms of assembly, part of the 50S ribosomal subunit. Contacts protein L29, and trigger factor when it is bound to the ribosome.

Its function is as follows. One of the early assembly proteins it binds 23S rRNA. One of the proteins that surrounds the polypeptide exit tunnel on the outside of the ribosome. Forms the main docking site for trigger factor binding to the ribosome. The sequence is that of Large ribosomal subunit protein uL23 from Prochlorococcus marinus (strain NATL1A).